A 688-amino-acid polypeptide reads, in one-letter code: Two-component response regulator ORR23 (688 aa).

Positions 25 to 140 (RVLAVDDDPV…ELRNIWQHVI (116 aa)) constitute a Response regulatory domain. Position 76 is a 4-aspartylphosphate (aspartate 76). The tract at residues 161–212 (PPNADSDHVHGHVTCGSPDQSGRPSKKRKEYCSEEEDEGEVNTQDIDDPSAP) is disordered. Residues 193–208 (SEEEDEGEVNTQDIDD) show a composition bias toward acidic residues. The segment at residues 211-270 (APKKPRVVWSVELHRKFVAAVNQLGIDKAVPKRILELMNVEKLTRENVASHLQKYRLYLK) is a DNA-binding region (myb-like GARP).

This sequence belongs to the ARR family. Type-B subfamily. Post-translationally, two-component system major event consists of a His-to-Asp phosphorelay between a sensor histidine kinase (HK) and a response regulator (RR). In plants, the His-to-Asp phosphorelay involves an additional intermediate named Histidine-containing phosphotransfer protein (HPt). This multistep phosphorelay consists of a His-Asp-His-Asp sequential transfer of a phosphate group between first a His and an Asp of the HK protein, followed by the transfer to a conserved His of the HPt protein and finally the transfer to an Asp in the receiver domain of the RR protein.

Its subcellular location is the nucleus. Functionally, transcriptional activator that binds specific DNA sequence. Functions as a response regulator involved in His-to-Asp phosphorelay signal transduction system. Phosphorylation of the Asp residue in the receiver domain activates the ability of the protein to promote the transcription of target genes. May directly activate some type-A response regulators in response to cytokinins. This chain is Two-component response regulator ORR23, found in Oryza sativa subsp. indica (Rice).